The primary structure comprises 464 residues: MKNTPTQLEPNVPVTRSHSMGFVILISCAAGLGGLLYGYDTAVISGAIGFLKDLYSLSPFMEGLVISSIMIGGVVGVGISGFLSDRFGRRKILMTAALLFAISAIVSALSQDVSTLIIARIIGGLGIGMGSSLSVTYITEAAPPAIRGSLSSLYQLFTILGISATYFINLAVQRSGTYEWGVHTGWRWMLAYGMVPSVIFFLVLLVVPESPRWLAKAGKTNEALKILTRINGETVAKEELKNIENSLKIEQMGSLSQLFKPGLRKALVIGILLALFNQVIGMNAITYYGPEIFKMMGFGQNAGFVTTCIVGVVEVIFTVIAVLLIDKVGRKKLMSIGSAFMAIFMILIGTSFYFELTSGIMMIVLILGFVAAFCVSVGPITWIMISEIFPNHLRARAAGIATIFLWGANWAIGQFVPMMIDSFGLAYTFWIFAVINILCFLFVVTICPETKNKSLEEIEKLWIK.

12 helical membrane passes run 21–43, 63–85, 92–111, 116–138, 150–172, 185–207, 266–288, 303–325, 332–354, 364–386, 398–420, and 424–446; these read GFVILISCAAGLGGLLYGYDTAV, GLVISSIMIGGVVGVGISGFLSD, ILMTAALLFAISAIVSALSQ, LIIARIIGGLGIGMGSSLSVTYI, LSSLYQLFTILGISATYFINLAV, GWRWMLAYGMVPSVIFFLVLLVV, ALVIGILLALFNQVIGMNAITYY, GFVTTCIVGVVEVIFTVIAVLLI, KLMSIGSAFMAIFMILIGTSFYF, VLILGFVAAFCVSVGPITWIMIS, AGIATIFLWGANWAIGQFVPMMI, and GLAYTFWIFAVINILCFLFVVTI.

Belongs to the major facilitator superfamily. Sugar transporter (TC 2.A.1.1) family.

The protein resides in the cell membrane. It catalyses the reaction L-arabinose(in) + H(+)(in) = L-arabinose(out) + H(+)(out). The enzyme catalyses D-galactose(in) + H(+)(in) = D-galactose(out) + H(+)(out). The catalysed reaction is D-xylose(in) + H(+)(in) = D-xylose(out) + H(+)(out). Uptake of L-arabinose across the cytoplasmic membrane with the concomitant transport of protons into the cell (symport system). In the presence of inducing amounts of L-arabinose, can import both D-galactose and D-xylose. Can also transport the disaccharide alpha-1,5-arabinobiose. The protein is Arabinose-proton symporter (araE) of Bacillus subtilis (strain 168).